Reading from the N-terminus, the 186-residue chain is Ribosomal RNA small subunit methyltransferase G (186 aa).

S-adenosyl-L-methionine is bound by residues G59, F64, 110–111, and R124; that span reads IE.

It belongs to the methyltransferase superfamily. RNA methyltransferase RsmG family.

It localises to the cytoplasm. The catalysed reaction is guanosine(527) in 16S rRNA + S-adenosyl-L-methionine = N(7)-methylguanosine(527) in 16S rRNA + S-adenosyl-L-homocysteine. In terms of biological role, specifically methylates the N7 position of guanine in position 527 of 16S rRNA. This Campylobacter curvus (strain 525.92) protein is Ribosomal RNA small subunit methyltransferase G.